The following is a 540-amino-acid chain: Probable ATP-dependent RNA helicase DDX28 (540 aa).

Residues L3–L18 carry the Mitochondrial targeting signal motif. Residues G126–S156 carry the Q motif motif. One can recognise a Helicase ATP-binding domain in the interval I159–T351. A172–T179 serves as a coordination point for ATP. The Nuclear export signal motif lies at L180–L191. Residues D286–D289 carry the DEAD motif. A Helicase C-terminal domain is found at K377–L536. Residues R520–R523 carry the Nuclear localization signal motif.

It belongs to the DEAD box helicase family. In terms of assembly, monomer. Found in a complex with GRSF1, DHX30, FASTKD2 and FASTKD5. Associates with the 16S mitochondrial rRNA (16S mt-rRNA) and with the mitochondrial ribosome large subunit (39S).

It localises to the nucleus. Its subcellular location is the mitochondrion. The protein resides in the mitochondrion matrix. It is found in the mitochondrion nucleoid. The enzyme catalyses ATP + H2O = ADP + phosphate + H(+). Functionally, plays an essential role in facilitating the proper assembly of the mitochondrial large ribosomal subunit and its helicase activity is essential for this function. May be involved in RNA processing or transport. Has RNA and Mg(2+)-dependent ATPase activity. This Mus musculus (Mouse) protein is Probable ATP-dependent RNA helicase DDX28 (Ddx28).